The sequence spans 264 residues: S-adenosylmethionine decarboxylase proenzyme (264 aa).

The active-site Schiff-base intermediate with substrate; via pyruvic acid is Ser113. Residue Ser113 is modified to Pyruvic acid (Ser); by autocatalysis. His118 functions as the Proton acceptor; for processing activity in the catalytic mechanism. Cys141 (proton donor; for catalytic activity) is an active-site residue.

This sequence belongs to the prokaryotic AdoMetDC family. Type 2 subfamily. Heterooctamer of four alpha and four beta chains arranged as a tetramer of alpha/beta heterodimers. Pyruvate is required as a cofactor. In terms of processing, is synthesized initially as an inactive proenzyme. Formation of the active enzyme involves a self-maturation process in which the active site pyruvoyl group is generated from an internal serine residue via an autocatalytic post-translational modification. Two non-identical subunits are generated from the proenzyme in this reaction, and the pyruvate is formed at the N-terminus of the alpha chain, which is derived from the carboxyl end of the proenzyme. The post-translation cleavage follows an unusual pathway, termed non-hydrolytic serinolysis, in which the side chain hydroxyl group of the serine supplies its oxygen atom to form the C-terminus of the beta chain, while the remainder of the serine residue undergoes an oxidative deamination to produce ammonia and the pyruvoyl group blocking the N-terminus of the alpha chain.

The catalysed reaction is S-adenosyl-L-methionine + H(+) = S-adenosyl 3-(methylsulfanyl)propylamine + CO2. It participates in amine and polyamine biosynthesis; S-adenosylmethioninamine biosynthesis; S-adenosylmethioninamine from S-adenosyl-L-methionine: step 1/1. Functionally, catalyzes the decarboxylation of S-adenosylmethionine to S-adenosylmethioninamine (dcAdoMet), the propylamine donor required for the synthesis of the polyamines spermine and spermidine from the diamine putrescine. This Xanthomonas oryzae pv. oryzae (strain MAFF 311018) protein is S-adenosylmethionine decarboxylase proenzyme.